The sequence spans 138 residues: MAKSIPRISSRRNGRIGSGNNVRRIPKGVIHVQASFHNTIVTVTDVRGRVVSWSSAGTSGFKGTRRGTPFAAQTAATNAIRTVVDQGMLRAEVLIKGPGLGRDAALRAIRRSGILLTFVRDLTPMPHNGCRPPKQRRV.

The disordered stretch occupies residues 1 to 22 (MAKSIPRISSRRNGRIGSGNNV).

This sequence belongs to the universal ribosomal protein uS11 family. As to quaternary structure, part of the 30S ribosomal subunit.

It localises to the plastid. This chain is Small ribosomal subunit protein uS11c, found in Cuscuta reflexa (Southern Asian dodder).